The primary structure comprises 499 residues: Lipopolysaccharide core galacturonosyltransferase RgtA (499 aa).

The next 10 helical transmembrane spans lie at 11 to 31 (TAGL…IVLP), 74 to 94 (IGAL…FYGL), 103 to 123 (EALA…SYMA), 125 to 145 (QDLT…YGFF), 165 to 185 (IGLI…IAIL), 199 to 219 (MLAA…WLQG), 248 to 268 (LLAF…IFAA), 291 to 311 (MMLA…STTV), 316 to 336 (LDPF…AAGL), and 351 to 371 (VLMA…GLIG).

Belongs to the glycosyltransferase 83 family.

The protein resides in the cell inner membrane. It participates in bacterial outer membrane biogenesis; LPS core biosynthesis. In terms of biological role, involved in the modification of the lipopolysaccharide (LPS) inner core. Catalyzes the transfer of a galacturonic acid (GalA) residue to the 4-position of the outer Kdo (3-deoxy-D-manno-octulosonic acid) residue of the LPS inner core, using dodecaprenyl phosphate-GalA as the donor substrate. GalA addition by RgtA is required for RgtB activity. In Rhizobium johnstonii (strain DSM 114642 / LMG 32736 / 3841) (Rhizobium leguminosarum bv. viciae), this protein is Lipopolysaccharide core galacturonosyltransferase RgtA.